The following is a 158-amino-acid chain: Serine-protein kinase RsbW (158 aa).

It belongs to the anti-sigma-factor family.

It catalyses the reaction L-seryl-[protein] + ATP = O-phospho-L-seryl-[protein] + ADP + H(+). It carries out the reaction L-threonyl-[protein] + ATP = O-phospho-L-threonyl-[protein] + ADP + H(+). In terms of biological role, negative regulator of sigma-B activity. Phosphorylates and inactivates its specific antagonist protein, RsbV. Upon phosphorylation of RsbV, RsbW is released and binds to sigma-B, thereby blocking its ability to form an RNA polymerase holoenzyme (E-sigma-B). The polypeptide is Serine-protein kinase RsbW (Oceanobacillus iheyensis (strain DSM 14371 / CIP 107618 / JCM 11309 / KCTC 3954 / HTE831)).